The chain runs to 358 residues: Peptide chain release factor 1 (358 aa).

Gln-233 carries the N5-methylglutamine modification.

It belongs to the prokaryotic/mitochondrial release factor family. In terms of processing, methylated by PrmC. Methylation increases the termination efficiency of RF1.

Its subcellular location is the cytoplasm. Peptide chain release factor 1 directs the termination of translation in response to the peptide chain termination codons UAG and UAA. The protein is Peptide chain release factor 1 of Staphylococcus haemolyticus (strain JCSC1435).